The sequence spans 355 residues: Guanine nucleotide-binding protein subunit alpha-14 (355 aa).

Residues 34–355 (RELKLLLLGT…QLNLREFNLV (322 aa)) form the G-alpha domain. Residues 37-50 (KLLLLGTGESGKST) are G1 motif. Residues 42 to 49 (GTGESGKS), 176 to 182 (LRVRVPT), 201 to 205 (DVGGQ), 270 to 273 (NKKD), and Ala327 contribute to the GTP site. Residue Ser49 participates in Mg(2+) binding. Positions 174 to 182 (DVLRVRVPT) are G2 motif. Arg179 carries the ADP-ribosylarginine; by cholera toxin modification. Mg(2+) is bound at residue Thr182. Residues 197-206 (FRMVDVGGQR) form a G3 motif region. Positions 266-273 (ILFLNKKD) are G4 motif. The segment at 325–330 (TCATDT) is G5 motif.

It belongs to the G-alpha family. G(q) subfamily. In terms of assembly, g proteins are composed of 3 units; alpha, beta and gamma. The alpha chain contains the guanine nucleotide binding site.

Guanine nucleotide-binding proteins (G proteins) are involved as modulators or transducers in various transmembrane signaling systems. In Homo sapiens (Human), this protein is Guanine nucleotide-binding protein subunit alpha-14 (GNA14).